A 200-amino-acid polypeptide reads, in one-letter code: MRCQVRLEIFYELNEQEQHMKHLLHRALRTHMLSIRQWGAHTKTRAEIRGGGRKPWKQKGTGRARAGSRRSPLWRGGGVAFGPRGVAMECKLNRKESRKATKIAFMACSKKIQIVNPPILEKPSSRTISQMLPPLPSRPVLWILHEKNPSLWLSCRNIKTLQLIQAEHIYVKPLLWAKQIWISHEAIPILENQLNVKMME.

The disordered stretch occupies residues 45 to 71; the sequence is RAEIRGGGRKPWKQKGTGRARAGSRRS. Residues 51 to 68 show a composition bias toward basic residues; the sequence is GGRKPWKQKGTGRARAGS.

It belongs to the universal ribosomal protein uL4 family. In terms of assembly, part of the 50S ribosomal subunit.

It is found in the plastid. The protein resides in the chloroplast. Probably binds the 23S rRNA. The polypeptide is Large ribosomal subunit protein uL4c (rpl4) (Cyanidioschyzon merolae (strain NIES-3377 / 10D) (Unicellular red alga)).